The following is a 221-amino-acid chain: MARITSEEMKERLAVYFIMGSQNSERPAEDVLKEALDGGVTLFQFREKGSAALEGEEKEALARQLQRLCRTYGVPFIVNDDVELAIAIDADGVHVGQDDEDARRVREKIGDKILGVSAHNVEEARAAIEAGADYIGVGPIYPTRSKDDANEAQGPGILRHLREQGITIPIVAIGGITADNTRAVIEAGADGVSVISAIASAPEPKAAAAALATAVREANLR.

Residues 44 to 48 and N79 each bind 4-amino-2-methyl-5-(diphosphooxymethyl)pyrimidine; that span reads QFREK. Mg(2+)-binding residues include D80 and D99. S117 provides a ligand contact to 4-amino-2-methyl-5-(diphosphooxymethyl)pyrimidine. 143-145 lines the 2-[(2R,5Z)-2-carboxy-4-methylthiazol-5(2H)-ylidene]ethyl phosphate pocket; that stretch reads TRS. K146 is a 4-amino-2-methyl-5-(diphosphooxymethyl)pyrimidine binding site. 2-[(2R,5Z)-2-carboxy-4-methylthiazol-5(2H)-ylidene]ethyl phosphate-binding positions include G175 and 195–196; that span reads IS.

It belongs to the thiamine-phosphate synthase family. The cofactor is Mg(2+).

It carries out the reaction 2-[(2R,5Z)-2-carboxy-4-methylthiazol-5(2H)-ylidene]ethyl phosphate + 4-amino-2-methyl-5-(diphosphooxymethyl)pyrimidine + 2 H(+) = thiamine phosphate + CO2 + diphosphate. It catalyses the reaction 2-(2-carboxy-4-methylthiazol-5-yl)ethyl phosphate + 4-amino-2-methyl-5-(diphosphooxymethyl)pyrimidine + 2 H(+) = thiamine phosphate + CO2 + diphosphate. The catalysed reaction is 4-methyl-5-(2-phosphooxyethyl)-thiazole + 4-amino-2-methyl-5-(diphosphooxymethyl)pyrimidine + H(+) = thiamine phosphate + diphosphate. The protein operates within cofactor biosynthesis; thiamine diphosphate biosynthesis; thiamine phosphate from 4-amino-2-methyl-5-diphosphomethylpyrimidine and 4-methyl-5-(2-phosphoethyl)-thiazole: step 1/1. Functionally, condenses 4-methyl-5-(beta-hydroxyethyl)thiazole monophosphate (THZ-P) and 2-methyl-4-amino-5-hydroxymethyl pyrimidine pyrophosphate (HMP-PP) to form thiamine monophosphate (TMP). The protein is Thiamine-phosphate synthase of Geobacillus thermodenitrificans (strain NG80-2).